Reading from the N-terminus, the 32-residue chain is Cytochrome b6-f complex subunit 7 (32 aa).

Residues Ile-5–Leu-25 traverse the membrane as a helical segment.

It belongs to the PetM family. As to quaternary structure, the 4 large subunits of the cytochrome b6-f complex are cytochrome b6, subunit IV (17 kDa polypeptide, PetD), cytochrome f and the Rieske protein, while the 4 small subunits are PetG, PetL, PetM and PetN. The complex functions as a dimer.

It is found in the cellular thylakoid membrane. In terms of biological role, component of the cytochrome b6-f complex, which mediates electron transfer between photosystem II (PSII) and photosystem I (PSI), cyclic electron flow around PSI, and state transitions. The protein is Cytochrome b6-f complex subunit 7 of Synechococcus sp. (strain CC9902).